Consider the following 202-residue polypeptide: Ribosome maturation factor RimP (202 aa).

The protein belongs to the RimP family.

Its subcellular location is the cytoplasm. In terms of biological role, required for maturation of 30S ribosomal subunits. This chain is Ribosome maturation factor RimP, found in Polaromonas naphthalenivorans (strain CJ2).